The sequence spans 151 residues: Transcriptional regulator MraZ (151 aa).

2 consecutive SpoVT-AbrB domains span residues 5–51 (AHEL…PVAE) and 81–124 (AEIL…GREQ).

It belongs to the MraZ family. As to quaternary structure, forms oligomers.

Its subcellular location is the cytoplasm. It is found in the nucleoid. This Neisseria meningitidis serogroup A / serotype 4A (strain DSM 15465 / Z2491) protein is Transcriptional regulator MraZ.